Reading from the N-terminus, the 4923-residue chain is Bridge-like lipid transfer protein family member 1 (4923 aa).

Residues 25–45 traverse the membrane as a helical segment; sequence FVWLLVATIMSCGWIIYLTYY. Disordered regions lie at residues 160 to 179, 606 to 631, 1203 to 1277, 1300 to 1334, 1357 to 1400, 1471 to 1494, 1630 to 1660, 1878 to 1948, 2191 to 2235, 2262 to 2281, 2355 to 2375, 2550 to 2655, 2885 to 2910, 3564 to 3596, 3645 to 3695, 3739 to 3797, 3848 to 3884, 4017 to 4071, 4102 to 4124, 4249 to 4309, and 4797 to 4827; these read NRDE…SVHI, HSKS…KPRW, SLHV…SARL, FSSE…DSST, TEEF…SVEG, TNKR…SEES, SAAK…DLSI, RDGV…PDSS, SKSH…LQCN, PHRA…RTGN, NTLD…QEDL, RYTA…SEQS, IRQP…VSIN, YSNS…IKVE, FSPT…RKSA, LHPS…SLQS, GMRD…AKGK, PTSA…TGPP, AVTG…SSVT, DGQT…AAAQ, and RMFA…EKEE. Positions 1210–1226 are enriched in low complexity; it reads SHSSASSSEENSSSSAA. Positions 1237–1248 are enriched in polar residues; that stretch reads PSPSTELMNVTT. Positions 1260-1271 are enriched in low complexity; it reads SPLRSPLKRQSS. Residues 1641 to 1658 are compositionally biased toward polar residues; it reads TEGTTPGSLSTPHGQTDL. Over residues 1887 to 1898 the composition is skewed to low complexity; the sequence is SSGSQTGSGYST. Polar residues predominate over residues 1907–1920; it reads NDAQSPASEPNNNS. The span at 1921–1931 shows a compositional bias: acidic residues; it reads DSDEQDEGVES. Composition is skewed to polar residues over residues 2208–2218 and 2267–2281; these read PYQSLSYTSGD and EQTA…RTGN. Residues 2550-2560 show a composition bias toward polar residues; sequence RYTAGSSSPTP. A compositionally biased stretch (basic and acidic residues) spans 2606-2624; sequence TRSREPRGRGTLGRSERRT. Basic and acidic residues predominate over residues 3581 to 3595; it reads KRSDRPREDLPDIKV. A compositionally biased stretch (basic and acidic residues) spans 3746–3770; it reads TEHEDLALRRSCERSSRSLDQDSPP. Over residues 4017-4039 the composition is skewed to polar residues; that stretch reads PTSATYPSEGQHTPSSTPPSVHN. Residues 4044 to 4056 show a composition bias toward low complexity; the sequence is PGGPSTGLGSPLG. Polar residues-rich tracts occupy residues 4249-4268, 4276-4286, and 4804-4814; these read DGQT…TPSH, TGRTRSVSDSS, and GQKSPTTQQDE. The span at 4816–4827 shows a compositional bias: basic and acidic residues; it reads SSDKKEEREKEE.

The protein localises to the cell membrane. It localises to the endoplasmic reticulum membrane. Its subcellular location is the mitochondrion membrane. Tube-forming lipid transport protein which provides phosphatidylethanolamine for glycosylphosphatidylinositol (GPI) anchor synthesis in the endoplasmic reticulum. Plays a role in endosomal trafficking and endosome recycling. Also involved in the actin cytoskeleton and cilia structural dynamics. Acts as a regulator of phagocytosis. In Danio rerio (Zebrafish), this protein is Bridge-like lipid transfer protein family member 1 (bltp1).